A 177-amino-acid polypeptide reads, in one-letter code: Adenine phosphoribosyltransferase (177 aa).

This sequence belongs to the purine/pyrimidine phosphoribosyltransferase family. As to quaternary structure, homodimer.

It is found in the cytoplasm. The catalysed reaction is AMP + diphosphate = 5-phospho-alpha-D-ribose 1-diphosphate + adenine. The protein operates within purine metabolism; AMP biosynthesis via salvage pathway; AMP from adenine: step 1/1. Functionally, catalyzes a salvage reaction resulting in the formation of AMP, that is energically less costly than de novo synthesis. The chain is Adenine phosphoribosyltransferase from Anaeromyxobacter sp. (strain Fw109-5).